The following is a 311-amino-acid chain: Malate dehydrogenase (311 aa).

NAD(+)-binding positions include 7–13 (GAAGGIG) and D34. Substrate contacts are provided by R81 and R87. NAD(+) is bound by residues N94 and 117-119 (ITN). N119 and R153 together coordinate substrate. The active-site Proton acceptor is the H177. M227 serves as a coordination point for NAD(+).

The protein belongs to the LDH/MDH superfamily. MDH type 1 family. In terms of assembly, homodimer.

It carries out the reaction (S)-malate + NAD(+) = oxaloacetate + NADH + H(+). Catalyzes the reversible oxidation of malate to oxaloacetate. The polypeptide is Malate dehydrogenase (Histophilus somni (strain 2336) (Haemophilus somnus)).